Consider the following 282-residue polypeptide: Reaction center protein L chain (282 aa).

Over Ala-2–Val-32 the chain is Cytoplasmic. Residues Gly-33–Leu-56 form a helical membrane-spanning segment. Over Gln-57–Lys-83 the chain is Periplasmic. Residues Gly-84–Leu-112 traverse the membrane as a helical segment. The Cytoplasmic portion of the chain corresponds to Gly-113–Tyr-116. The chain crosses the membrane as a helical span at residues His-117–Met-139. Over Met-140 to Asn-171 the chain is Periplasmic. The (7R,8Z)-bacteriochlorophyll b site is built by His-154 and His-174. Residues Pro-172 to Ala-199 traverse the membrane as a helical segment. A Fe cation-binding site is contributed by His-191. Topologically, residues Asn-200–Ile-225 are cytoplasmic. Residue Phe-217 coordinates a ubiquinone. The chain crosses the membrane as a helical span at residues Gly-226–Ile-251. His-231 contributes to the Fe cation binding site. Over Thr-252 to Gly-282 the chain is Periplasmic.

Belongs to the reaction center PufL/M/PsbA/D family. In terms of assembly, reaction center is composed of four bacteriochlorophylls, two bacteriopheophytins, two ubiquinones, one iron, and three highly hydrophobic polypeptide chains (designated L, M, and H).

The protein localises to the cellular chromatophore membrane. Functionally, the reaction center is a membrane-bound complex that mediates the initial photochemical event in the electron transfer process of photosynthesis. In Cereibacter sphaeroides (strain ATCC 17023 / DSM 158 / JCM 6121 / CCUG 31486 / LMG 2827 / NBRC 12203 / NCIMB 8253 / ATH 2.4.1.) (Rhodobacter sphaeroides), this protein is Reaction center protein L chain (pufL).